The sequence spans 322 residues: Aldo-keto reductase family 1 member C23 (322 aa).

NADP(+) is bound at residue 20–24 (GFGTY). K31 lines the substrate pocket. Position 50 (D50) interacts with NADP(+). The active-site Proton donor is the Y55. H117 contributes to the substrate binding site. NADP(+) is bound by residues 166–167 (SN), Q190, 216–221 (YSALGS), and 269–279 (KSYNEKRIKEN).

The protein belongs to the aldo/keto reductase family. In terms of assembly, monomer. Detected in follicle granulosa cells (at protein level). Detected in heart, lung, liver, kidney, stomach, uterus, testis, skeletal muscle and granulosa cells of the follicle wall.

It localises to the cytoplasm. Its function is as follows. NADP-dependent oxidoreductase that has 20-alpha-hydroxysteroid dehydrogenase activity. The polypeptide is Aldo-keto reductase family 1 member C23 (AKR1C23) (Equus caballus (Horse)).